Consider the following 286-residue polypeptide: Energy-coupling factor transporter ATP-binding protein EcfA2 (286 aa).

Residues 3–246 enclose the ABC transporter domain; it reads IQFNQVSYIY…KTQLLKWHIE (244 aa). 40 to 47 lines the ATP pocket; the sequence is GQTGSGKS.

This sequence belongs to the ABC transporter superfamily. Energy-coupling factor EcfA family. In terms of assembly, forms a stable energy-coupling factor (ECF) transporter complex composed of 2 membrane-embedded substrate-binding proteins (S component), 2 ATP-binding proteins (A component) and 2 transmembrane proteins (T component).

The protein resides in the cell membrane. Functionally, ATP-binding (A) component of a common energy-coupling factor (ECF) ABC-transporter complex. Unlike classic ABC transporters this ECF transporter provides the energy necessary to transport a number of different substrates. This is Energy-coupling factor transporter ATP-binding protein EcfA2 from Staphylococcus epidermidis (strain ATCC 35984 / DSM 28319 / BCRC 17069 / CCUG 31568 / BM 3577 / RP62A).